The following is an 894-amino-acid chain: MENPSASRDNKGFCFPDIPVEEMDGWVKNLISEEDMFSSSSTSELMNFESFASWCNSPSAADILFTQYGLSTSQSIIPFGGLEGSYACEKRPLDCTSVPRSLSHSLDEKMLKALSLFMEFSGEGILAQFWTPIKTGDQYMLSTCDQAYLLDSRLSGYREASRRFTFSAEANQCSYPGLPGRVFISGVPEWTSNVMYYKTAEYLRMKHALDNEVRGSIAIPVLEASGSSCCAVLELVTCREKPNFDVEMNSVCRALQAVNLQTSTIPRRQYLSSNQKEALAEIRDVLRAVCYAHRLPLALAWIPCSYSKGANDELVKVYGKNSKECSLLCIEETSCYVNDMEMEGFVNACLEHYLREGQGIVGKALISNKPSFSSDVKTFDICEYPLVQHARKFGLNAAVATKLRSTFTGDNDYILEFFLPVSMKGSSEQQLLLDSLSGTMQRLCRTLKTVSDAESIDGTEFGSRSVEMTNLPQATVSVGSFHTTFLDTDVNSTRSTFSNISSNKRNEMAGSQGTLQQEISGARRLEKKKSSTEKNVSLNVLQQYFSGSLKDAAKSLGVCPTTLKRICRQHGIMRWPSRKINKVNRSLRKIQTVLDSVQGVEGGLKFDSVTGEFVAVGPFIQEFGTQKSLSSHDEDALARSQGDMDEDVSVEPLEVKSHDGGGVKLEEDVETNHQAGPGSLKKPWTWISKQSGLIYSDDTDIGKRSEEVNKDKEDLCVRRCLSSVALAGDGMNTRIERGNGTVEPNHSISSSMSDSSNSSGAVLLGSSSASLEQNWNQIRTHNNSGESGSSSTLTVKATYREDTVRFKLDPYVVGCSQLYREVAKRFKLQEGAFQLKYLDDEEEWVMLVTDSDLHECFEILNGMRKHTVKFLVRDIPNTAMGSSAGSNGYLGTGT.

Residues 517–603 (QEISGARRLE…LDSVQGVEGG (87 aa)) form the RWP-RK domain. A coiled-coil region spans residues 578-598 (RKINKVNRSLRKIQTVLDSVQ). The segment at 732–763 (NTRIERGNGTVEPNHSISSSMSDSSNSSGAVL) is disordered. Positions 747–763 (SISSSMSDSSNSSGAVL) are enriched in low complexity. Positions 792 to 875 (TLTVKATYRE…HTVKFLVRDI (84 aa)) constitute a PB1 domain.

It is found in the nucleus. Functionally, probable transcription factor. The polypeptide is Protein NLP9 (NLP9) (Arabidopsis thaliana (Mouse-ear cress)).